The primary structure comprises 91 residues: UPF0367 protein cce_2199 (91 aa).

This sequence belongs to the UPF0367 family.

In Crocosphaera subtropica (strain ATCC 51142 / BH68) (Cyanothece sp. (strain ATCC 51142)), this protein is UPF0367 protein cce_2199.